The primary structure comprises 496 residues: Fibronectin type III and SPRY domain-containing protein 1 (496 aa).

Positions 4–99 (QREALRKIIT…ALESSEELLE (96 aa)) form a coiled coil. Residues 105-162 (LQASDSEDFSQAAKEIKDGITMAPAFRLSLKAKVSDNMSHLMVDFAQERQMLQALKFL) enclose the COS domain. Residues 164–268 (VPSAPTIDLA…EPVTLETPAF (105 aa)) form the Fibronectin type-III domain. Residues 290–477 (WDAMGGKVQD…VTTGLQVPSA (188 aa)) enclose the B30.2/SPRY domain. Residues 301 to 336 (KAREKEGKGRTASPVNSPARGTPSPKRMSSGRGGRD) form a disordered region. R310 and R320 each carry omega-N-methylarginine.

In terms of assembly, oligomerization is required for binding to microtubules.

Its subcellular location is the cytoplasm. The protein localises to the cytoskeleton. The protein resides in the microtubule organizing center. It localises to the centrosome. It is found in the nucleus. Its subcellular location is the cleavage furrow. In terms of biological role, may be involved in microtubule organization and stabilization. The sequence is that of Fibronectin type III and SPRY domain-containing protein 1 (Fsd1) from Mus musculus (Mouse).